The sequence spans 395 residues: RNA polymerase II elongation factor ELL3 (395 aa).

Disordered stretches follow at residues 129–177 (LTEG…SEPM) and 189–281 (PSRE…SPEE). S242 bears the Phosphoserine mark. Over residues 243–260 (QEGEDWGQDEDEEGDEDG) the composition is skewed to acidic residues. Positions 269 to 279 (SAPSASESPSP) are enriched in low complexity. Positions 283–393 (PDYLLQYRAI…LILEFEEKNR (111 aa)) constitute an OCEL domain.

It belongs to the ELL/occludin family. In terms of assembly, component of the little elongation complex (LEC), at least composed of ELL (ELL, ELL2 or ELL3), ZC3H8, ICE1 and ICE2. Component of the super elongation complex (SEC), at least composed of EAF1, EAF2, CDK9, MLLT3/AF9, AFF (AFF1 or AFF4), the P-TEFb complex and ELL (ELL, ELL2 or ELL3). Interacts with AFF4. In terms of tissue distribution, actively expressed in embryonic stem cells (ES cells), while it is weakly expressed in differentiated cells.

Its subcellular location is the nucleus. Functionally, enhancer-binding elongation factor that specifically binds enhancers in embryonic stem cells (ES cells), marks them, and is required for their future activation during stem cell specification. Elongation factor component of the super elongation complex (SEC), a complex required to increase the catalytic rate of RNA polymerase II transcription by suppressing transient pausing by the polymerase at multiple sites along the DNA. Component of the little elongation complex (LEC), a complex required to regulate small nuclear RNA (snRNA) gene transcription by RNA polymerase II and III. Does not only bind to enhancer regions of active genes, but also marks the enhancers that are in a poised or inactive state in ES cells and is required for establishing proper RNA polymerase II occupancy at developmentally regulated genes in a cohesin-dependent manner. Probably required for priming developmentally regulated genes for later recruitment of the super elongation complex (SEC), for transcriptional activation during differentiation. Required for recruitment of P-TEFb within SEC during differentiation. Probably preloaded on germ cell chromatin, suggesting that it may prime gene activation by marking enhancers as early as in the germ cells. Promoting epithelial-mesenchymal transition (EMT). The protein is RNA polymerase II elongation factor ELL3 (Ell3) of Mus musculus (Mouse).